A 356-amino-acid chain; its full sequence is tRNA pseudouridine synthase D (356 aa).

Aspartate 84 (nucleophile) is an active-site residue. The 144-residue stretch at 159–302 (GVPNYYGPQR…RRGARRPIRV (144 aa)) folds into the TRUD domain.

This sequence belongs to the pseudouridine synthase TruD family.

It catalyses the reaction uridine(13) in tRNA = pseudouridine(13) in tRNA. Functionally, responsible for synthesis of pseudouridine from uracil-13 in transfer RNAs. This is tRNA pseudouridine synthase D from Thermus thermophilus (strain ATCC BAA-163 / DSM 7039 / HB27).